The chain runs to 610 residues: Atypical kinase COQ8, mitochondrial (610 aa).

Residues 98–111 (GVKHLQEQSSKEIK) show a composition bias toward basic and acidic residues. The tract at residues 98–144 (GVKHLQEQSSKEIKNPISQPILPNKKDEISPAKPSAIDSSIKDVTKS) is disordered.

The protein belongs to the protein kinase superfamily. ADCK protein kinase family.

It localises to the mitochondrion. It functions in the pathway cofactor biosynthesis; ubiquinone biosynthesis. Functionally, atypical kinase involved in the biosynthesis of coenzyme Q, also named ubiquinone, an essential lipid-soluble electron transporter for aerobic cellular respiration. Its substrate specificity is still unclear: may act as a protein kinase that mediates phosphorylation of coq3. According to other reports, acts as a small molecule kinase, possibly a lipid kinase that phosphorylates a prenyl lipid in the ubiquinone biosynthesis pathway, as suggested by its ability to bind coenzyme Q lipid intermediates. This Schizosaccharomyces pombe (strain 972 / ATCC 24843) (Fission yeast) protein is Atypical kinase COQ8, mitochondrial.